Consider the following 358-residue polypeptide: UDP-N-acetylglucosamine--N-acetylmuramyl-(pentapeptide) pyrophosphoryl-undecaprenol N-acetylglucosamine transferase (358 aa).

UDP-N-acetyl-alpha-D-glucosamine contacts are provided by residues 12–14 (TAG), Arg165, Ser195, and Gln290.

Belongs to the glycosyltransferase 28 family. MurG subfamily.

The protein localises to the cell membrane. The enzyme catalyses di-trans,octa-cis-undecaprenyl diphospho-N-acetyl-alpha-D-muramoyl-L-alanyl-D-glutamyl-meso-2,6-diaminopimeloyl-D-alanyl-D-alanine + UDP-N-acetyl-alpha-D-glucosamine = di-trans,octa-cis-undecaprenyl diphospho-[N-acetyl-alpha-D-glucosaminyl-(1-&gt;4)]-N-acetyl-alpha-D-muramoyl-L-alanyl-D-glutamyl-meso-2,6-diaminopimeloyl-D-alanyl-D-alanine + UDP + H(+). It participates in cell wall biogenesis; peptidoglycan biosynthesis. Cell wall formation. Catalyzes the transfer of a GlcNAc subunit on undecaprenyl-pyrophosphoryl-MurNAc-pentapeptide (lipid intermediate I) to form undecaprenyl-pyrophosphoryl-MurNAc-(pentapeptide)GlcNAc (lipid intermediate II). The chain is UDP-N-acetylglucosamine--N-acetylmuramyl-(pentapeptide) pyrophosphoryl-undecaprenol N-acetylglucosamine transferase from Clostridium tetani (strain Massachusetts / E88).